Consider the following 612-residue polypeptide: Threonine--tRNA ligase (612 aa).

The catalytic stretch occupies residues 218–509 (DHRKLGVELG…LSEHFGGNFP (292 aa)). Residues Cys310, His361, and His486 each coordinate Zn(2+).

This sequence belongs to the class-II aminoacyl-tRNA synthetase family. In terms of assembly, homodimer. It depends on Zn(2+) as a cofactor.

The protein resides in the cytoplasm. The catalysed reaction is tRNA(Thr) + L-threonine + ATP = L-threonyl-tRNA(Thr) + AMP + diphosphate + H(+). Catalyzes the attachment of threonine to tRNA(Thr) in a two-step reaction: L-threonine is first activated by ATP to form Thr-AMP and then transferred to the acceptor end of tRNA(Thr). Also edits incorrectly charged L-seryl-tRNA(Thr). In Helicobacter pylori (strain ATCC 700392 / 26695) (Campylobacter pylori), this protein is Threonine--tRNA ligase.